The primary structure comprises 220 residues: Putative glutathione S-transferase C460.02c (220 aa).

Residues 1-81 form the GST N-terminal domain; the sequence is MFLGTIYSFK…YFYEKGKHND (81 aa). Residues 89–216 enclose the GST C-terminal domain; that stretch reads NEIEEAEMLK…YPLELPLTVT (128 aa).

It belongs to the GST superfamily.

Its subcellular location is the cytoplasm. It catalyses the reaction RX + glutathione = an S-substituted glutathione + a halide anion + H(+). In terms of biological role, involved in the oxidative stress response and detoxification. The protein is Putative glutathione S-transferase C460.02c of Schizosaccharomyces pombe (strain 972 / ATCC 24843) (Fission yeast).